The following is a 542-amino-acid chain: Hydroxylamine reductase (542 aa).

[4Fe-4S] cluster is bound by residues Cys3, Cys6, Cys15, and Cys21. Positions 238, 262, 307, 398, 426, 451, 485, and 487 each coordinate hybrid [4Fe-2O-2S] cluster. Cys398 carries the post-translational modification Cysteine persulfide.

Belongs to the HCP family. [4Fe-4S] cluster is required as a cofactor. Hybrid [4Fe-2O-2S] cluster serves as cofactor.

Its subcellular location is the cytoplasm. The catalysed reaction is A + NH4(+) + H2O = hydroxylamine + AH2 + H(+). Catalyzes the reduction of hydroxylamine to form NH(3) and H(2)O. The chain is Hydroxylamine reductase from Microcystis aeruginosa (strain NIES-843 / IAM M-2473).